The primary structure comprises 162 residues: Ribosome maturation factor RimP (162 aa).

This sequence belongs to the RimP family.

It localises to the cytoplasm. Functionally, required for maturation of 30S ribosomal subunits. This chain is Ribosome maturation factor RimP, found in Streptococcus gordonii (strain Challis / ATCC 35105 / BCRC 15272 / CH1 / DL1 / V288).